A 36-amino-acid chain; its full sequence is Photosystem II reaction center protein Y (36 aa).

Residues 1–4 (MDSR) are Lumenal-facing. A helical membrane pass occupies residues 5-23 (LLVVLIPVLAAASWAVYNI). Topologically, residues 24 to 36 (GRVALQQFRKMTS) are stromal.

Belongs to the PsbY family. As to quaternary structure, PSII is composed of 1 copy each of membrane proteins PsbA, PsbB, PsbC, PsbD, PsbE, PsbF, PsbH, PsbI, PsbJ, PsbK, PsbL, PsbM, PsbT, PsbX, PsbY, PsbZ, Psb30/Ycf12, at least 3 peripheral proteins of the oxygen-evolving complex and a large number of cofactors. It forms dimeric complexes.

It localises to the plastid. It is found in the chloroplast thylakoid membrane. Functionally, loosely associated component of the core of photosystem II (PSII), it is not always seen in crystals. PSII is a light-driven water plastoquinone oxidoreductase, using light energy to abstract electrons from H(2)O, generating a proton gradient subsequently used for ATP formation. This is Photosystem II reaction center protein Y from Pyropia yezoensis (Susabi-nori).